Here is an 84-residue protein sequence, read N- to C-terminus: Cell division topological specificity factor (84 aa).

The protein belongs to the MinE family.

Functionally, prevents the cell division inhibition by proteins MinC and MinD at internal division sites while permitting inhibition at polar sites. This ensures cell division at the proper site by restricting the formation of a division septum at the midpoint of the long axis of the cell. In Desulfotalea psychrophila (strain LSv54 / DSM 12343), this protein is Cell division topological specificity factor.